A 286-amino-acid polypeptide reads, in one-letter code: ATP synthase gamma chain (286 aa).

The protein belongs to the ATPase gamma chain family. In terms of assembly, F-type ATPases have 2 components, CF(1) - the catalytic core - and CF(0) - the membrane proton channel. CF(1) has five subunits: alpha(3), beta(3), gamma(1), delta(1), epsilon(1). CF(0) has three main subunits: a, b and c.

The protein localises to the cell inner membrane. Produces ATP from ADP in the presence of a proton gradient across the membrane. The gamma chain is believed to be important in regulating ATPase activity and the flow of protons through the CF(0) complex. This Pseudomonas aeruginosa (strain UCBPP-PA14) protein is ATP synthase gamma chain.